A 199-amino-acid polypeptide reads, in one-letter code: Superoxide dismutase [Mn] (199 aa).

Mn(2+)-binding residues include histidine 27, histidine 76, aspartate 160, and histidine 164.

This sequence belongs to the iron/manganese superoxide dismutase family. It depends on Mn(2+) as a cofactor.

The catalysed reaction is 2 superoxide + 2 H(+) = H2O2 + O2. Destroys superoxide anion radicals which are normally produced within the cells and which are toxic to biological systems. The chain is Superoxide dismutase [Mn] (sodA) from Corynebacterium diphtheriae (strain ATCC 700971 / NCTC 13129 / Biotype gravis).